The following is an 823-amino-acid chain: ATM interactor (823 aa).

Residues 28-67 are disordered; it reads GAAAAASGPWVPPGPRLRGSRPRPAGATQQPAVPAPPAGE. Over residues 49 to 59 the composition is skewed to low complexity; it reads PRPAGATQQPA. The segment at 84-109 adopts a C2H2-type 1 zinc-finger fold; sequence ILCTVRGCGKILPNSPALNMHLVKSH. Residues 165-184 form a C2H2-type 2; degenerate zinc finger; it reads HKCSKCSNSYGTEWDLKRHA. Residues 214–225 show a composition bias toward basic and acidic residues; sequence HEIPAEHRDPPS. Disordered regions lie at residues 214 to 234, 268 to 289, and 610 to 634; these read HEIP…ENCA, EPSF…TPPR, and RSLL…NPGI. Residues 223-442 are required for formation of RAD51 foci; it reads PPSKKRKMEN…ADSSVSSCSQ (220 aa). 2 stretches are compositionally biased toward polar residues: residues 275-286 and 613-629; these read CGSNTDKQTLTT and LSDT…SGPA.

As to quaternary structure, interacts via its C-terminus with ATM. Interacts with DYNLL1; this interaction inhibits ATMIN transcriptional activity and hence may play a role in a feedback loop whereby DYNLL1 inhibits transactivation of its own promoter by ATMIN. As to expression, ubiquitously expressed in normal tissues and cancer cell lines with highest levels in placenta and skeletal muscle.

The protein localises to the nucleus. Functionally, transcription factor. Plays a crucial role in cell survival and RAD51 foci formation in response to methylating DNA damage. Involved in regulating the activity of ATM in the absence of DNA damage. May play a role in stabilizing ATM. Binds to the DYNLL1 promoter and activates its transcription. In Homo sapiens (Human), this protein is ATM interactor (ATMIN).